We begin with the raw amino-acid sequence, 684 residues long: Signal peptide peptidase-like 2C (684 aa).

A signal peptide spans 1-21 (MACLGFLLPVGFLLLISTVAG). The Lumenal segment spans residues 22–186 (GKYGVAHVVS…APPEPIIDYN (165 aa)). A PA domain is found at 83–163 (SPSQRPLRQT…HYADMLDILS (81 aa)). An N-linked (GlcNAc...) asparagine glycan is attached at asparagine 100. The chain crosses the membrane as a helical span at residues 187 to 207 (MLVIFILAVGTVAAGGYWAGL). At 208-253 (TEANRLQRRRARRGGGSGGHHQLQEAAAAEGAQKEDNEDIPVDFTP) the chain is on the cytoplasmic side. The segment at 216 to 242 (RRARRGGGSGGHHQLQEAAAAEGAQKE) is disordered. A compositionally biased stretch (low complexity) spans 227-238 (HHQLQEAAAAEG). A helical membrane pass occupies residues 254–274 (AMTGVVVTLSCSLMLLLYFFY). The Lumenal portion of the chain corresponds to 275 to 276 (DH). Residues 277 to 297 (FVYVTIGIFGLGAGIGLYSCL) traverse the membrane as a helical segment. Residues 298 to 319 (SPLVCRLSLRQYQRPPHSLWAS) are Cytoplasmic-facing. A helical transmembrane segment spans residues 320–340 (LPLPLLLLASLCATVIIFWVA). Over 341 to 346 (YRNEDR) the chain is Lumenal. A helical membrane pass occupies residues 347-365 (WAWLLQDTLGISYCLFVLH). The Cytoplasmic portion of the chain corresponds to 366-376 (RVRLPTLKNCS). Residues 377 to 397 (SFLLALLAFDVFFVFVTPFFT) form a helical membrane-spanning segment. The active site involves aspartate 386. The Lumenal segment spans residues 398 to 439 (KTGESIMAQVALGPAESSSHERLPMVLKVPRLRVSALTLCSQ). A helical transmembrane segment spans residues 440–460 (PFSILGFGDIVVPGFLVAYCC). The active site involves aspartate 448. Topologically, residues 461-472 (RFDVQVCSRQIY) are cytoplasmic. The helical transmembrane segment at 473-493 (FVACTVAYAVGLLVTFMAMVL) threads the bilayer. Residues 494 to 495 (MQ) lie on the Lumenal side of the membrane. The helical transmembrane segment at 496–516 (MGQPALLYLVSSTLLTSLAVA) threads the bilayer. The short motif at 499–501 (PAL) is the PAL element. The Cytoplasmic segment spans residues 517 to 684 (ACRQELSLFW…RKSMSTQAPL (168 aa)). Positions 548–614 (KQEGAADAHT…SDAHLDPNEL (67 aa)) are disordered. Polar residues predominate over residues 582 to 592 (EIVTISENEAT). The segment covering 594-611 (PEDRSDSSEGWSDAHLDP) has biased composition (basic and acidic residues).

This sequence belongs to the peptidase A22B family. Interacts (via active sites) with FREY; the interaction stabilizes FREY1 protein and inhibits SPPL2C proteolytic activity. In terms of processing, glycosylated. In terms of tissue distribution, highly expressed in testis where it is primarily localised in spermatids (at protein level).

Its subcellular location is the endoplasmic reticulum membrane. Functionally, sperm-specific intramembrane-cleaving aspartic protease (I-CLiP) that cleaves distinct tail-anchored proteins and SNARE proteins. In elongated spermatids, modulates intracellular Ca(2+) homeostasis by controlling PLN abundance through proteolytic cleavage. During spermatogenesis, processes SNARE proteins and impacts vesicular trafficking which supports compartmental reorganization in maturating spermatids and may play a role in formation of the acrosome. In round spermatids, acts as a scaffold protein supporting FREY1 in IZUMO1 recruitment at the endoplasmic reticulum membrane and coordination of IZUMO1 complex assembly. Stabilizes FREY1 at the endoplasmic reticulum membrane through interaction. May recruit IZUMO1 interaction partners. The polypeptide is Signal peptide peptidase-like 2C (Homo sapiens (Human)).